The following is a 417-amino-acid chain: Putative UDP-arabinose 4-epimerase 2 (417 aa).

Topologically, residues 1–31 (MLNLGRARTGRQNRSMSFEGLDFADPKKNNN) are cytoplasmic. A helical; Signal-anchor for type II membrane protein transmembrane segment spans residues 32–54 (YMGKIVLVMTLTAMCILLLNQSP). The Lumenal portion of the chain corresponds to 55 to 417 (TFNTPSVFSR…YGSSSLVSAY (363 aa)). 71-102 (HVLVTGGAGYIGSHAALRLLKDSYRVTIVDNL) lines the NAD(+) pocket. Tyr219 (proton acceptor) is an active-site residue.

It belongs to the NAD(P)-dependent epimerase/dehydratase family. Requires NAD(+) as cofactor.

The protein localises to the golgi apparatus. It is found in the golgi stack membrane. It carries out the reaction UDP-beta-L-arabinopyranose = UDP-alpha-D-xylose. It participates in nucleotide-sugar biosynthesis; UDP-L-arabinose biosynthesis; UDP-L-arabinose from UDP-alpha-D-xylose: step 1/1. The protein operates within cell wall biogenesis; cell wall polysaccharide biosynthesis. The chain is Putative UDP-arabinose 4-epimerase 2 from Arabidopsis thaliana (Mouse-ear cress).